A 147-amino-acid chain; its full sequence is Hemoglobin subunit beta (147 aa).

The Globin domain occupies 3-147 (EWTDSERAII…VVSALGREYH (145 aa)). Heme b is bound by residues His-64 and His-93.

This sequence belongs to the globin family. Heterotetramer of two alpha chains and two beta chains. As to expression, red blood cells.

Functionally, involved in oxygen transport from gills to the various peripheral tissues. The protein is Hemoglobin subunit beta (hbb) of Gadus morhua (Atlantic cod).